The primary structure comprises 478 residues: Methylenetetrahydrofolate--tRNA-(uracil-5-)-methyltransferase TrmFO (478 aa).

16–21 (GAGLAG) lines the FAD pocket. The segment at 429–448 (PLANPPTKGPDGKRLRGPEK) is disordered. Basic and acidic residues predominate over residues 438–448 (PDGKRLRGPEK).

It belongs to the MnmG family. TrmFO subfamily. FAD is required as a cofactor.

The protein localises to the cytoplasm. It carries out the reaction uridine(54) in tRNA + (6R)-5,10-methylene-5,6,7,8-tetrahydrofolate + NADH + H(+) = 5-methyluridine(54) in tRNA + (6S)-5,6,7,8-tetrahydrofolate + NAD(+). The enzyme catalyses uridine(54) in tRNA + (6R)-5,10-methylene-5,6,7,8-tetrahydrofolate + NADPH + H(+) = 5-methyluridine(54) in tRNA + (6S)-5,6,7,8-tetrahydrofolate + NADP(+). Its function is as follows. Catalyzes the folate-dependent formation of 5-methyl-uridine at position 54 (M-5-U54) in all tRNAs. This chain is Methylenetetrahydrofolate--tRNA-(uracil-5-)-methyltransferase TrmFO, found in Rhodopseudomonas palustris (strain ATCC BAA-98 / CGA009).